We begin with the raw amino-acid sequence, 391 residues long: Glycosyltransferase afumC (391 aa).

It belongs to the afumC glycosyltransferase family.

Its pathway is secondary metabolite biosynthesis. Activity is significantly decreased by addition of divalent cations such as Mg(2+), Mn(2+), Zn(2+), Ca(2+), Co(2+), Cu(2+), and Ni(2+); while Fe(2+) has little effect. Glycosyltransferase; part of the gene cluster that mediates the biosynthesis fumihopaside A, a hopane-type glucoside that enhances the thermotolerance and UV resistance of N.fumigata. The first step of fumihopaside A biosynthesis is performed by the squalene hopane cyclase afumA that catalyzes the cyclization of 3S-oxidosqualene into the hopene 21-beta-H-hopane-3-beta,22-diol. The cytochrome P450 monooxygenase afumB is responsible for both hydroxylation at C-24 and oxidations at C-30 of the afumA product. The glycosyltransferase afumC then catalyzes the glycosylation at C-24, using UDP-D-glucose as a donor, to produce fumihopaside A. AfumC is also able to accept UDP-D-galactose and UDP-D-glucuronic acid as donors to yield minor derivatives. Fumihopaside B, another minor derivative produced, is different from fumihopaside A due to the presence of a double bond between C-22 and C-29. The polypeptide is Glycosyltransferase afumC (Aspergillus fumigatus (strain CBS 144.89 / FGSC A1163 / CEA10) (Neosartorya fumigata)).